The primary structure comprises 287 residues: Protoheme IX farnesyltransferase (287 aa).

7 helical membrane passes run 19 to 39, 100 to 120, 134 to 154, 162 to 182, 212 to 232, 233 to 253, and 267 to 287; these read LMVA…VTIT, MVLC…IVAV, FALL…WLAV, MLVV…WLHA, VWFH…LLEG, VGMR…AMLA, and VLCA…VSLF.

It belongs to the UbiA prenyltransferase family. Protoheme IX farnesyltransferase subfamily.

The protein localises to the cell inner membrane. The enzyme catalyses heme b + (2E,6E)-farnesyl diphosphate + H2O = Fe(II)-heme o + diphosphate. Its pathway is porphyrin-containing compound metabolism; heme O biosynthesis; heme O from protoheme: step 1/1. Its function is as follows. Converts heme B (protoheme IX) to heme O by substitution of the vinyl group on carbon 2 of heme B porphyrin ring with a hydroxyethyl farnesyl side group. The sequence is that of Protoheme IX farnesyltransferase from Nitratidesulfovibrio vulgaris (strain DP4) (Desulfovibrio vulgaris).